We begin with the raw amino-acid sequence, 119 residues long: UPF0738 protein BAA_1286 (119 aa).

Belongs to the UPF0738 family.

This chain is UPF0738 protein BAA_1286, found in Bacillus anthracis (strain A0248).